The primary structure comprises 132 residues: Fluoride-specific ion channel FluC (132 aa).

4 helical membrane passes run 5 to 25, 32 to 52, 70 to 90, and 105 to 125; these read LYIALGGALGSVGRFALSGLV, TFPWGTLVVNVVGSFIIGFFA, FVMTGVLGGFTTFSSFSLQTL, and VVGSLVLCLVAVWLGHIAAVG. Na(+)-binding residues include G77 and T80.

The protein belongs to the fluoride channel Fluc/FEX (TC 1.A.43) family.

The protein resides in the cell inner membrane. It catalyses the reaction fluoride(in) = fluoride(out). Its activity is regulated as follows. Na(+) is not transported, but it plays an essential structural role and its presence is essential for fluoride channel function. Its function is as follows. Fluoride-specific ion channel. Important for reducing fluoride concentration in the cell, thus reducing its toxicity. This chain is Fluoride-specific ion channel FluC, found in Opitutus terrae (strain DSM 11246 / JCM 15787 / PB90-1).